The chain runs to 216 residues: Protein-L-isoaspartate O-methyltransferase (216 aa).

Residue S66 is part of the active site.

Belongs to the methyltransferase superfamily. L-isoaspartyl/D-aspartyl protein methyltransferase family.

The protein resides in the cytoplasm. It carries out the reaction [protein]-L-isoaspartate + S-adenosyl-L-methionine = [protein]-L-isoaspartate alpha-methyl ester + S-adenosyl-L-homocysteine. Functionally, catalyzes the methyl esterification of L-isoaspartyl residues in peptides and proteins that result from spontaneous decomposition of normal L-aspartyl and L-asparaginyl residues. It plays a role in the repair and/or degradation of damaged proteins. The sequence is that of Protein-L-isoaspartate O-methyltransferase from Colwellia psychrerythraea (strain 34H / ATCC BAA-681) (Vibrio psychroerythus).